A 340-amino-acid chain; its full sequence is Dihydroorotate dehydrogenase (quinone) (340 aa).

FMN-binding positions include 63–67 (AGLDK) and threonine 87. Lysine 67 contacts substrate. Residue 112 to 116 (NRMGF) participates in substrate binding. Positions 140 and 173 each coordinate FMN. Asparagine 173 lines the substrate pocket. Serine 176 functions as the Nucleophile in the catalytic mechanism. Asparagine 178 lines the substrate pocket. FMN contacts are provided by lysine 218 and threonine 246. 247–248 (NT) contributes to the substrate binding site. Residues glycine 269, glycine 298, and 319–320 (YT) contribute to the FMN site.

This sequence belongs to the dihydroorotate dehydrogenase family. Type 2 subfamily. In terms of assembly, monomer. FMN is required as a cofactor.

The protein localises to the cell membrane. It carries out the reaction (S)-dihydroorotate + a quinone = orotate + a quinol. Its pathway is pyrimidine metabolism; UMP biosynthesis via de novo pathway; orotate from (S)-dihydroorotate (quinone route): step 1/1. Catalyzes the conversion of dihydroorotate to orotate with quinone as electron acceptor. The chain is Dihydroorotate dehydrogenase (quinone) from Methylococcus capsulatus (strain ATCC 33009 / NCIMB 11132 / Bath).